The chain runs to 730 residues: 1,4-alpha-glucan branching enzyme GlgB (730 aa).

Residue Asp-405 is the Nucleophile of the active site. Catalysis depends on Glu-458, which acts as the Proton donor.

This sequence belongs to the glycosyl hydrolase 13 family. GlgB subfamily. In terms of assembly, monomer.

It catalyses the reaction Transfers a segment of a (1-&gt;4)-alpha-D-glucan chain to a primary hydroxy group in a similar glucan chain.. It participates in glycan biosynthesis; glycogen biosynthesis. Functionally, catalyzes the formation of the alpha-1,6-glucosidic linkages in glycogen by scission of a 1,4-alpha-linked oligosaccharide from growing alpha-1,4-glucan chains and the subsequent attachment of the oligosaccharide to the alpha-1,6 position. The protein is 1,4-alpha-glucan branching enzyme GlgB of Haemophilus influenzae (strain PittGG).